Here is a 115-residue protein sequence, read N- to C-terminus: UPF0738 protein SERP0585 (115 aa).

The protein belongs to the UPF0738 family.

This is UPF0738 protein SERP0585 from Staphylococcus epidermidis (strain ATCC 35984 / DSM 28319 / BCRC 17069 / CCUG 31568 / BM 3577 / RP62A).